Consider the following 336-residue polypeptide: MNVYYDKDCNLAIIKGMKVTIVGYGSQGHAHACNLKDSGVDVTVALRAGSASVVKAQNAGLKVASVADAVASADLVMILTPDEFQSSLYRDEIEPKLKQGATLAFAHGFAIHYNQIVPRNDLDVVMIAPKAPGHTVRSEFVKGGGIPDLIAVFQNASGKAREVALSYASAIGGGRTGIIETTFQDETETDLFGEQAVLCGGAVELVKAGFETLVEAGYAPEMAYFECLHELKLIVDLMYEGGIANMNYSISNNAEYGEYVTGPQVINAESRKAMKECLANIQNGEYAKRFILEGMANYPEMTARRRLNAAHPIEQVGGKLRSMMPWIQKIVDKSKN.

In terms of domain architecture, KARI N-terminal Rossmann spans 1 to 181 (MNVYYDKDCN…GGGRTGIIET (181 aa)). Residues 24–27 (YGSQ), arginine 47, serine 50, serine 52, and 82–85 (DEFQ) contribute to the NADP(+) site. Residue histidine 107 is part of the active site. Glycine 133 provides a ligand contact to NADP(+). In terms of domain architecture, KARI C-terminal knotted spans 182-327 (TFQDETETDL…GKLRSMMPWI (146 aa)). Aspartate 190, glutamate 194, glutamate 226, and glutamate 230 together coordinate Mg(2+). A substrate-binding site is contributed by serine 251.

Belongs to the ketol-acid reductoisomerase family. The cofactor is Mg(2+).

It carries out the reaction (2R)-2,3-dihydroxy-3-methylbutanoate + NADP(+) = (2S)-2-acetolactate + NADPH + H(+). The catalysed reaction is (2R,3R)-2,3-dihydroxy-3-methylpentanoate + NADP(+) = (S)-2-ethyl-2-hydroxy-3-oxobutanoate + NADPH + H(+). The protein operates within amino-acid biosynthesis; L-isoleucine biosynthesis; L-isoleucine from 2-oxobutanoate: step 2/4. Its pathway is amino-acid biosynthesis; L-valine biosynthesis; L-valine from pyruvate: step 2/4. Involved in the biosynthesis of branched-chain amino acids (BCAA). Catalyzes an alkyl-migration followed by a ketol-acid reduction of (S)-2-acetolactate (S2AL) to yield (R)-2,3-dihydroxy-isovalerate. In the isomerase reaction, S2AL is rearranged via a Mg-dependent methyl migration to produce 3-hydroxy-3-methyl-2-ketobutyrate (HMKB). In the reductase reaction, this 2-ketoacid undergoes a metal-dependent reduction by NADPH to yield (R)-2,3-dihydroxy-isovalerate. This chain is Ketol-acid reductoisomerase (NADP(+)), found in Geotalea daltonii (strain DSM 22248 / JCM 15807 / FRC-32) (Geobacter daltonii).